The sequence spans 439 residues: Sorting nexin-31 (439 aa).

Residues 1-109 (MKMHFCIPVS…EFLTLVQLHT (109 aa)) form the PX domain. The segment at 384–409 (TEQSPEMQIEVPEQGRSKKHPSQPSQ) is disordered.

Belongs to the sorting nexin family. Interacts with CCDC22, CCDC93, VPS26C and VPS35L, associates with the retriever and CCC complexes.

Its function is as follows. May be involved in protein trafficking. This is Sorting nexin-31 (Snx31) from Mus musculus (Mouse).